The primary structure comprises 96 residues: Large ribosomal subunit protein bL28 (96 aa).

The disordered stretch occupies residues 1-24 (MSRSCELTGKGVQSGHNVSHANNK).

This sequence belongs to the bacterial ribosomal protein bL28 family.

This Sinorhizobium fredii (strain NBRC 101917 / NGR234) protein is Large ribosomal subunit protein bL28.